We begin with the raw amino-acid sequence, 190 residues long: MAGVDEVGRGALFGPVVAAAVLVPIEAINQLQALGVKDSKQLSPQHRSQLAQALPDYVHSYGISFADVPTINRVNIRQASLLAMERAVQKLPVMPAWVLVDGRDTLPHIAMAQMAVTGGDRKSLLISAASILAKVWRDTLITRLAERFPGYDLASNKGYGTAKHRQGLRQYGATPLHRPLFCRKIIENPD.

Residues 1–190 (MAGVDEVGRG…FCRKIIENPD (190 aa)) enclose the RNase H type-2 domain. A divalent metal cation is bound by residues D5, E6, and D101.

Belongs to the RNase HII family. Mn(2+) serves as cofactor. Requires Mg(2+) as cofactor.

It localises to the cytoplasm. It catalyses the reaction Endonucleolytic cleavage to 5'-phosphomonoester.. Its function is as follows. Endonuclease that specifically degrades the RNA of RNA-DNA hybrids. This chain is Ribonuclease HII (rnhB), found in Synechocystis sp. (strain ATCC 27184 / PCC 6803 / Kazusa).